Consider the following 459-residue polypeptide: Exodeoxyribonuclease 7 large subunit (459 aa).

This sequence belongs to the XseA family. Heterooligomer composed of large and small subunits.

The protein resides in the cytoplasm. It carries out the reaction Exonucleolytic cleavage in either 5'- to 3'- or 3'- to 5'-direction to yield nucleoside 5'-phosphates.. Functionally, bidirectionally degrades single-stranded DNA into large acid-insoluble oligonucleotides, which are then degraded further into small acid-soluble oligonucleotides. The polypeptide is Exodeoxyribonuclease 7 large subunit (Pseudomonas fluorescens (strain ATCC BAA-477 / NRRL B-23932 / Pf-5)).